A 278-amino-acid polypeptide reads, in one-letter code: TATA box-binding protein-associated factor RNA polymerase I subunit D (278 aa).

2 disordered regions span residues 19–71 (LANR…SSFE) and 88–115 (KKRYKKKKKKRYQPTGRPRGRPEGRRNP). Ser-23 is subject to Phosphoserine. 2 stretches are compositionally biased toward basic residues: residues 43-53 (REKRNPIRKFV) and 88-99 (KKRYKKKKKKRY). Phosphoserine is present on residues Ser-138 and Ser-234.

Component of the transcription factor SL1/TIF-IB complex, composed of TBP and at least TAF1A, TAF1B, TAF1C and TAF1D. Interacts with UBTF.

The protein localises to the nucleus. In terms of biological role, component of the transcription factor SL1/TIF-IB complex, which is involved in the assembly of the PIC (preinitiation complex) during RNA polymerase I-dependent transcription. The rate of PIC formation probably is primarily dependent on the rate of association of SL1/TIF-IB with the rDNA promoter. SL1/TIF-IB is involved in stabilization of nucleolar transcription factor 1/UBTF on rDNA. Formation of SL1/TIF-IB excludes the association of TBP with TFIID subunits. This chain is TATA box-binding protein-associated factor RNA polymerase I subunit D (TAF1D), found in Pongo abelii (Sumatran orangutan).